A 33-amino-acid polypeptide reads, in one-letter code: Photosystem II reaction center protein Psb30 (33 aa).

The helical transmembrane segment at 5 to 25 (IVFQLTSLVLILAAGPLVVVL) threads the bilayer.

This sequence belongs to the Psb30/Ycf12 family. As to quaternary structure, PSII is composed of 1 copy each of membrane proteins PsbA, PsbB, PsbC, PsbD, PsbE, PsbF, PsbH, PsbI, PsbJ, PsbK, PsbL, PsbM, PsbT, PsbX, PsbY, PsbZ, Psb30/Ycf12, peripheral proteins of the oxygen-evolving complex and a large number of cofactors. It forms dimeric complexes.

The protein resides in the plastid. Its subcellular location is the chloroplast thylakoid membrane. A core subunit of photosystem II (PSII), probably helps stabilize the reaction center. The polypeptide is Photosystem II reaction center protein Psb30 (Tetradesmus obliquus (Green alga)).